The following is a 256-amino-acid chain: uncharacterized protein (256 aa).

In terms of domain architecture, HTH cro/C1-type spans 10-64 (IRALRESRDWSLADLAAATGVSTMGLSYLERGARKPHKSTVQKVENGLGLPPGTY). Residues 21 to 40 (LADLAAATGVSTMGLSYLER) constitute a DNA-binding region (H-T-H motif).

This is an uncharacterized protein from Mycobacterium bovis (strain ATCC BAA-935 / AF2122/97).